The primary structure comprises 388 residues: Ferrochelatase (388 aa).

Residues H196 and E277 each contribute to the Fe cation site.

The protein belongs to the ferrochelatase family.

It localises to the cytoplasm. The catalysed reaction is heme b + 2 H(+) = protoporphyrin IX + Fe(2+). It functions in the pathway porphyrin-containing compound metabolism; protoheme biosynthesis; protoheme from protoporphyrin-IX: step 1/1. Catalyzes the ferrous insertion into protoporphyrin IX. This Trichormus variabilis (strain ATCC 29413 / PCC 7937) (Anabaena variabilis) protein is Ferrochelatase.